The chain runs to 269 residues: 4-hydroxy-tetrahydrodipicolinate reductase (269 aa).

NAD(+) is bound by residues 9–14 (GCAGKM), Asp-35, 102–104 (GTT), and 128–131 (APNF). His-158 functions as the Proton donor/acceptor in the catalytic mechanism. His-159 is a binding site for (S)-2,3,4,5-tetrahydrodipicolinate. The active-site Proton donor is Lys-162. 168 to 169 (GT) serves as a coordination point for (S)-2,3,4,5-tetrahydrodipicolinate.

Belongs to the DapB family.

The protein resides in the cytoplasm. The catalysed reaction is (S)-2,3,4,5-tetrahydrodipicolinate + NAD(+) + H2O = (2S,4S)-4-hydroxy-2,3,4,5-tetrahydrodipicolinate + NADH + H(+). The enzyme catalyses (S)-2,3,4,5-tetrahydrodipicolinate + NADP(+) + H2O = (2S,4S)-4-hydroxy-2,3,4,5-tetrahydrodipicolinate + NADPH + H(+). The protein operates within amino-acid biosynthesis; L-lysine biosynthesis via DAP pathway; (S)-tetrahydrodipicolinate from L-aspartate: step 4/4. Its function is as follows. Catalyzes the conversion of 4-hydroxy-tetrahydrodipicolinate (HTPA) to tetrahydrodipicolinate. The sequence is that of 4-hydroxy-tetrahydrodipicolinate reductase from Gloeobacter violaceus (strain ATCC 29082 / PCC 7421).